We begin with the raw amino-acid sequence, 122 residues long: Large ribosomal subunit protein uL24 (122 aa).

Belongs to the universal ribosomal protein uL24 family. Part of the 50S ribosomal subunit.

Functionally, one of two assembly initiator proteins, it binds directly to the 5'-end of the 23S rRNA, where it nucleates assembly of the 50S subunit. Its function is as follows. Located at the polypeptide exit tunnel on the outside of the subunit. This is Large ribosomal subunit protein uL24 from Methanosarcina mazei (strain ATCC BAA-159 / DSM 3647 / Goe1 / Go1 / JCM 11833 / OCM 88) (Methanosarcina frisia).